Consider the following 368-residue polypeptide: Phosphate acyltransferase (368 aa).

Belongs to the PlsX family. As to quaternary structure, homodimer. Probably interacts with PlsY.

It is found in the cytoplasm. It catalyses the reaction a fatty acyl-[ACP] + phosphate = an acyl phosphate + holo-[ACP]. It functions in the pathway lipid metabolism; phospholipid metabolism. Functionally, catalyzes the reversible formation of acyl-phosphate (acyl-PO(4)) from acyl-[acyl-carrier-protein] (acyl-ACP). This enzyme utilizes acyl-ACP as fatty acyl donor, but not acyl-CoA. This chain is Phosphate acyltransferase, found in Cereibacter sphaeroides (strain ATCC 17025 / ATH 2.4.3) (Rhodobacter sphaeroides).